The chain runs to 137 residues: Large-conductance mechanosensitive channel (137 aa).

Transmembrane regions (helical) follow at residues 15–35, 38–58, and 80–100; these read IDLA…NSIV, ILMP…MFIQ, and GNFI…FLFV.

This sequence belongs to the MscL family. Homopentamer.

Its subcellular location is the cell inner membrane. In terms of biological role, channel that opens in response to stretch forces in the membrane lipid bilayer. May participate in the regulation of osmotic pressure changes within the cell. This chain is Large-conductance mechanosensitive channel, found in Bartonella quintana (strain Toulouse) (Rochalimaea quintana).